A 448-amino-acid chain; its full sequence is Tryptophan dimethylallyltransferase 2 (448 aa).

Residues 80–81 and E89 contribute to the L-tryptophan site; that span reads IL. R100, K186, and Y188 together coordinate substrate. L-tryptophan contacts are provided by Y190 and R249. Substrate contacts are provided by R262, K264, Y266, Q348, Y350, Y414, and Y418.

This sequence belongs to the tryptophan dimethylallyltransferase family. Homodimer.

The enzyme catalyses L-tryptophan + dimethylallyl diphosphate = 4-(3-methylbut-2-enyl)-L-tryptophan + diphosphate. Its pathway is alkaloid biosynthesis; ergot alkaloid biosynthesis. Catalyzes the first step of ergot alkaloid biosynthesis. Ergot alkaloids, which are produced by endophyte fungi, can enhance plant host fitness, but also cause livestock toxicosis to host plants. This is Tryptophan dimethylallyltransferase 2 (dmaW2) from Claviceps purpurea (strain 20.1) (Ergot fungus).